Reading from the N-terminus, the 547-residue chain is MKNIKVITGVIATLGIFSALLLVTGILFYSAVSSDRLNFQNASALSYQQQELGGSFQTLIETRVTINRVAIRMLKNQRDPASLDAMNTLLTNAGASLNEAEKHFNNYVNSEAIAGKDPALDAQAEASFKQMYDVLQQSIHYLKADNYAAYGNLDAQKAQDDMEQVYDQWLSQNAQLIKLASDQNQSSFTQMQWTLGIILLIVLIVLAFIWLGLQRVLLRPLQRIMAHIQTIADGDLTHEIEAEGRSEMGQLAAGLKTMQQSLIRTVSAVRDNADSIYTGAGEISAGSSDLSSRTEQQASALEETAASMEQLTATVRQNTDNARQATGLAKTASETARKGGRVVDNVVSTMNDIAESSEKIVDITSVIDGIAFQTNILALNAAVEAARAGEQGRGFAVVAGEVRTLASRSAQAAKEIKVLIENSVSRIDTGSTQVREAGETMKEIVNAVTRVTDIMGEIASASDEQSKGIEQVAQAVSEMDSVTQQNASLVEESAAAAAALEDQANELRQAVAAFRIQKQPRREASPTTLSKGLTPQPAAEQANWESF.

Topologically, residues 1-5 are cytoplasmic; the sequence is MKNIK. A helical membrane pass occupies residues 6–29; that stretch reads VITGVIATLGIFSALLLVTGILFY. At 30-189 the chain is on the periplasmic side; it reads SAVSSDRLNF…ASDQNQSSFT (160 aa). A helical transmembrane segment spans residues 190-213; it reads QMQWTLGIILLIVLIVLAFIWLGL. At 214 to 547 the chain is on the cytoplasmic side; the sequence is QRVLLRPLQR…AAEQANWESF (334 aa). The HAMP domain maps to 215-267; the sequence is RVLLRPLQRIMAHIQTIADGDLTHEIEAEGRSEMGQLAAGLKTMQQSLIRTVS. Residues 272–501 enclose the Methyl-accepting transducer domain; it reads NADSIYTGAG…ESAAAAAALE (230 aa). Position 296 is a glutamate methyl ester (Gln) (Gln296). At Glu303 the chain carries Glutamate methyl ester (Glu). Glutamate methyl ester (Gln) is present on Gln310. Residues 317-336 form a disordered region; that stretch reads QNTDNARQATGLAKTASETA. Glutamate methyl ester (Glu) occurs at positions 492 and 501. The disordered stretch occupies residues 518-547; sequence KQPRREASPTTLSKGLTPQPAAEQANWESF.

It belongs to the methyl-accepting chemotaxis (MCP) protein family. Post-translationally, methylation level is increased by citrate and decreased by phenol.

It localises to the cell inner membrane. Its function is as follows. Acts as a receptor for citrate and mediates taxis away from phenol. Also mediates an attractant response to metal-citrate complexes. The protein is Methyl-accepting chemotaxis citrate transducer (tcp) of Salmonella typhimurium (strain LT2 / SGSC1412 / ATCC 700720).